The primary structure comprises 135 residues: Galectin-1 (135 aa).

Position 2 is an N-acetylalanine (A2). Positions 4–135 (GLVASNLNLK…DFKIKCVAFE (132 aa)) constitute a Galectin domain. N6-acetyllysine occurs at positions 13, 19, and 29. Position 30 is a phosphoserine (S30). A beta-D-galactoside is bound by residues 45 to 49 (HFNPR), H53, N62, and 69 to 72 (WGTE). K108 is subject to N6-acetyllysine; alternate. K108 is subject to N6-succinyllysine; alternate. Residue K128 is modified to N6-acetyllysine.

As to quaternary structure, homodimer. Binds LGALS3BP. Interacts with CD2, CD3, CD4, CD6, CD7, CD43, ALCAM and CD45. Interacts with laminin (via poly-N-acetyllactosamine). Interacts with SUSD2. Interacts with cargo receptor TMED10; the interaction mediates the translocation from the cytoplasm into the ERGIC (endoplasmic reticulum-Golgi intermediate compartment) and thereby secretion. Interacts with CD69.

The protein resides in the secreted. The protein localises to the extracellular space. It is found in the extracellular matrix. It localises to the cytoplasm. Functionally, lectin that binds beta-galactoside and a wide array of complex carbohydrates. Plays a role in regulating apoptosis, cell proliferation and cell differentiation. Inhibits CD45 protein phosphatase activity and therefore the dephosphorylation of Lyn kinase. Strong inducer of T-cell apoptosis. Plays a negative role in Th17 cell differentiation via activation of the receptor CD69. In Mus musculus (Mouse), this protein is Galectin-1 (Lgals1).